We begin with the raw amino-acid sequence, 476 residues long: MGIKFLEVIKPFCAVLPEIQKPERKIQFREKVLWTAITLFIFLVCCQIPLFGIMSSDSADPFYWMRVILASNRGTLMELGISPIVTSGLIMQLLAGAKIIGVGDTPKDRALFNGAQKLFGMIITIGQAIVYVMTGMYGDPSEMGAGICLLIIIQLFVAGLIVLLLDELLQKGYGLGSGISLFIATNICETIVWKAFSPTTVNTGRGTEFEGAIIALFHLLATRTDKVRALREGFYRQNLPNLMNLIATVFVFAVVIYFQGFRVDLPIKSARYRGQYNTYPIKLFYTSNIPIILQSALVSNLYVISQMLSTRFSGNFLVNLLGTWSDATSGGPARAYPVAGLCYYLSPPESFGSVLDDPVHAGIYIVFMLGSCAFFSKTWIEVSGSSAKDVAKQLKEQQMVMRGHRETSMVHELNRYIPTAAAFGGLCIGGLSVMADFLGAIGSGTGILLAVTIIYQYFEIFVKEQSEVGSMGALLF.

Residues 2–33 (GIKFLEVIKPFCAVLPEIQKPERKIQFREKVL) are Cytoplasmic-facing. A helical membrane pass occupies residues 34 to 53 (WTAITLFIFLVCCQIPLFGI). Residues 54–76 (MSSDSADPFYWMRVILASNRGTL) lie on the Lumenal side of the membrane. A helical transmembrane segment spans residues 77-96 (MELGISPIVTSGLIMQLLAG). The Cytoplasmic segment spans residues 97–117 (AKIIGVGDTPKDRALFNGAQK). A helical transmembrane segment spans residues 118 to 138 (LFGMIITIGQAIVYVMTGMYG). The Lumenal portion of the chain corresponds to 139-144 (DPSEMG). The helical transmembrane segment at 145 to 165 (AGICLLIIIQLFVAGLIVLLL) threads the bilayer. Residues 166 to 172 (DELLQKG) lie on the Cytoplasmic side of the membrane. The chain crosses the membrane as a helical span at residues 173 to 193 (YGLGSGISLFIATNICETIVW). Topologically, residues 194 to 240 (KAFSPTTVNTGRGTEFEGAIIALFHLLATRTDKVRALREGFYRQNLP) are lumenal. Residues 241 to 261 (NLMNLIATVFVFAVVIYFQGF) form a helical membrane-spanning segment. Over 262–288 (RVDLPIKSARYRGQYNTYPIKLFYTSN) the chain is Cytoplasmic. A helical membrane pass occupies residues 289–309 (IPIILQSALVSNLYVISQMLS). Topologically, residues 310–354 (TRFSGNFLVNLLGTWSDATSGGPARAYPVAGLCYYLSPPESFGSV) are lumenal. Residues 355-375 (LDDPVHAGIYIVFMLGSCAFF) form a helical membrane-spanning segment. Over 376–420 (SKTWIEVSGSSAKDVAKQLKEQQMVMRGHRETSMVHELNRYIPTA) the chain is Cytoplasmic. A helical membrane pass occupies residues 421–441 (AAFGGLCIGGLSVMADFLGAI). The Lumenal portion of the chain corresponds to 442 to 445 (GSGT). Residues 446–462 (GILLAVTIIYQYFEIFV) form a helical membrane-spanning segment. Residues 463-476 (KEQSEVGSMGALLF) are Cytoplasmic-facing.

It belongs to the SecY/SEC61-alpha family. In terms of assembly, the SEC61 channel-forming translocon complex consists of channel-forming core components SEC61A1, SEC61B and SEC61G and different auxiliary components such as SEC62 and SEC63. The SEC61 channel associates with the multi-pass translocon (MPT) complex.

The protein localises to the endoplasmic reticulum membrane. Its function is as follows. Component of SEC61 channel-forming translocon complex that mediates transport of signal peptide-containing precursor polypeptides across the endoplasmic reticulum (ER). Forms a ribosome receptor and a gated pore in the ER membrane, both functions required for cotranslational translocation of nascent polypeptides. May cooperate with auxiliary protein SEC62, SEC63 and HSPA5/BiP to enable post-translational transport of small presecretory proteins. The SEC61 channel is also involved in ER membrane insertion of transmembrane proteins: it mediates membrane insertion of the first few transmembrane segments of proteins, while insertion of subsequent transmembrane regions of multi-pass membrane proteins is mediated by the multi-pass translocon (MPT) complex. The polypeptide is Protein transport protein Sec61 subunit alpha (sec61a) (Hemitripterus americanus (Sea raven)).